Reading from the N-terminus, the 90-residue chain is Putative Fis-like DNA-binding protein (90 aa).

The H-T-H motif DNA-binding region spans 66–85 (QSRAAALLGIHRATLRKKLK).

The protein belongs to the transcriptional regulatory Fis family.

The chain is Putative Fis-like DNA-binding protein from Xylella fastidiosa (strain 9a5c).